Here is an 849-residue protein sequence, read N- to C-terminus: METIDSKQNINRESLLEERRKKLAKWKQKKAQFDAQKENQTSRNDIVTNSLEGKQTTEKFTERQERVKEELRKRKNEFRKSDEPVSVKPSKKKSKRSKVKKKISFDFSDDDDSEIGVSFRSKEHIQKVPEHDNEKDPLDEFMTSLKEEKMSNSKGMYDRGDILDVEDQLFELGGTDDEDVEDNTDNSNIAKIAKLKAKKRVKQIYYSPEELEPFQKNFYIESETVSSMSEMEVEELRLSLDNIKIKGTGCPKPVTKWSQLGLSTDTMVLITEKLHFGSLTPIQSQALPAIMSGRDVIGISKTGSGKTISYLLPLLRQVKAQRPLSKHETGPMGLILAPTRELALQIHEEVTKFTEADTSIRSVCCTGGSEMKKQITDLKRGTEIVVATPGRFIDILTLNDGKLLSTKRITFVVMDEADRLFDLGFEPQITQIMKTVRPDKQCVLFSATFPNKLRSFAVRVLHSPISITINSKGMVNENVKQKFRICHSEDEKFDNLVQLIHERSEFFDEVQSENDGQSSDVEEVDAKAIIFVSSQNICDFISKKLLNAGIVTCAIHAGKPYQERLMNLEKFKREKNSILLCTEVLSRGLNVPEVSLVIIYNAVKTFAQYVHTTGRTARGSRSGTAITLLLHDELSGAYILSKAMRDEEIKALDPLQAKELQEMSAKFESGMKKGKFRLSKGFGGKGLENIKSKREEAQNKDLELKKNDKRSDDLEKKINNPHEGHDSEPESSALIPRLNYELFKESTDGSIIFYAKVYINDLPQIVRWEATKNTTLLFIKHETGCSITNKGKFYPEGKEPKNENDEPKLYLLIEGQDEKDIQLSIELLEQKVKEGVVKAASLSLKSTKY.

Residues 13 to 81 are a coiled coil; the sequence is ESLLEERRKK…RKRKNEFRKS (69 aa). Residues 28–138 are disordered; the sequence is QKKAQFDAQK…PEHDNEKDPL (111 aa). The segment covering 38–54 has biased composition (polar residues); sequence ENQTSRNDIVTNSLEGK. Over residues 55-85 the composition is skewed to basic and acidic residues; the sequence is QTTEKFTERQERVKEELRKRKNEFRKSDEPV. Residues 89-102 show a composition bias toward basic residues; it reads PSKKKSKRSKVKKK. Residues 120–138 are compositionally biased toward basic and acidic residues; sequence RSKEHIQKVPEHDNEKDPL. The short motif at 255–284 is the Q motif element; that stretch reads TKWSQLGLSTDTMVLITEKLHFGSLTPIQS. The Helicase ATP-binding domain occupies 287–467; that stretch reads LPAIMSGRDV…VRVLHSPISI (181 aa). 300–307 contacts ATP; it reads SKTGSGKT. The DEAD box signature appears at 415–418; it reads DEAD. The Helicase C-terminal domain occupies 502 to 661; it reads ERSEFFDEVQ…LDPLQAKELQ (160 aa). The segment covering 689–728 has biased composition (basic and acidic residues); sequence NIKSKREEAQNKDLELKKNDKRSDDLEKKINNPHEGHDSE. A disordered region spans residues 689–731; it reads NIKSKREEAQNKDLELKKNDKRSDDLEKKINNPHEGHDSEPES.

It belongs to the DEAD box helicase family. DDX46/PRP5 subfamily. In terms of assembly, interacts with the U2 snRNP and HSH155.

Its subcellular location is the nucleus. The enzyme catalyses ATP + H2O = ADP + phosphate + H(+). In terms of biological role, ATP-dependent RNA helicase involved spliceosome assembly and in nuclear splicing. Catalyzes an ATP-dependent conformational change of U2 snRNP. Bridges U1 and U2 snRNPs and enables stable U2 snRNP association with intron RNA. This chain is Pre-mRNA-processing ATP-dependent RNA helicase PRP5 (PRP5), found in Saccharomyces cerevisiae (strain YJM789) (Baker's yeast).